The sequence spans 281 residues: Probable splicing factor, arginine/serine-rich 2 (281 aa).

Positions Val-2–Arg-72 constitute an RRM 1 domain. Basic and acidic residues-rich tracts occupy residues Glu-78 to Glu-97 and Lys-168 to Arg-190. Disordered regions lie at residues Glu-78–Phe-100 and Lys-168–Pro-281. In terms of domain architecture, RRM 2 spans Phe-112–Arg-186. Residues Ser-191 to Ser-215 are compositionally biased toward basic residues. The span at Pro-216–Ser-225 shows a compositional bias: basic and acidic residues. Residues Arg-245 to Arg-254 are compositionally biased toward basic residues.

It belongs to the splicing factor SR family. In terms of processing, extensively phosphorylated on serine residues in the RS domain.

The protein resides in the nucleus. Plays a functionally redundant role in spermatogenesis and growth rate control. Required for the development of somatic gonad structures and for progression from larval stage to adulthood. The polypeptide is Probable splicing factor, arginine/serine-rich 2 (rsp-2) (Caenorhabditis elegans).